The following is a 484-amino-acid chain: 60S ribosome subunit biogenesis protein NOP8 (484 aa).

The RRM domain occupies 7–83 (KRIFVGNIFH…NILKVDEAKP (77 aa)). A phosphoserine mark is found at S234, S239, and S268. Residues 260–330 (DKPMTLNDSD…EGDGQEDNEF (71 aa)) are disordered. The span at 320–329 (DEGDGQEDNE) shows a compositional bias: acidic residues. Residue S370 is modified to Phosphoserine.

Interacts with NIP7 and RRP43. Together with DBP6, URB1, URB2 and RSA3, forms an RNA-independent complex, which is required during early maturation of nascent 60S ribosomal subunits.

The protein resides in the nucleus. Its subcellular location is the nucleolus. Its function is as follows. Required for 60S ribosomal subunit synthesis. May be involved in assembly reactions occurring within late pre-ribosomal particles. This chain is 60S ribosome subunit biogenesis protein NOP8 (NOP8), found in Saccharomyces cerevisiae (strain ATCC 204508 / S288c) (Baker's yeast).